We begin with the raw amino-acid sequence, 177 residues long: MAILKWKLQRSTVREVSIAEPTTYTPAQTTAPTVSACTTEDGVSAPPRKRARGPSTNNTLCVANIRSVDSTINNIVTDNYNKHQRRNNCHSAATPIVQLQGDSNCLKCFRYRLNDKYKHLFELASSTWHWASPEAPHKNAIVTLTYSSEEQRQQFLNSVKIPPTIRHKVGFMSLHLL.

Residues 29 to 57 (TTAPTVSACTTEDGVSAPPRKRARGPSTN) are disordered.

Belongs to the papillomaviridae E8^E2C protein family.

The protein localises to the host nucleus. Its function is as follows. Plays a role in limiting the replication of viral DNA in keratinocytes. Recruits the host NCoR/SMRT complex to viral replication foci to mediate repression of both viral replication and transcription. This is Protein E8^E2C from Human papillomavirus 11.